A 386-amino-acid polypeptide reads, in one-letter code: 8-amino-7-oxononanoate synthase (386 aa).

R26 contributes to the substrate binding site. 104 to 105 (GY) contributes to the pyridoxal 5'-phosphate binding site. H129 serves as a coordination point for substrate. Pyridoxal 5'-phosphate is bound by residues S176, H204, and T232. N6-(pyridoxal phosphate)lysine is present on K235. Position 349 (T349) interacts with substrate.

Belongs to the class-II pyridoxal-phosphate-dependent aminotransferase family. BioF subfamily. In terms of assembly, homodimer. The cofactor is pyridoxal 5'-phosphate.

The enzyme catalyses 6-carboxyhexanoyl-[ACP] + L-alanine + H(+) = (8S)-8-amino-7-oxononanoate + holo-[ACP] + CO2. The protein operates within cofactor biosynthesis; biotin biosynthesis. Catalyzes the decarboxylative condensation of pimeloyl-[acyl-carrier protein] and L-alanine to produce 8-amino-7-oxononanoate (AON), [acyl-carrier protein], and carbon dioxide. This chain is 8-amino-7-oxononanoate synthase, found in Chromohalobacter salexigens (strain ATCC BAA-138 / DSM 3043 / CIP 106854 / NCIMB 13768 / 1H11).